A 429-amino-acid chain; its full sequence is Enolase (429 aa).

Residue Gln-163 coordinates (2R)-2-phosphoglycerate. The active-site Proton donor is the Glu-205. Mg(2+) contacts are provided by Asp-242, Glu-285, and Asp-312. (2R)-2-phosphoglycerate contacts are provided by Lys-337, Arg-366, Ser-367, and Lys-388. The active-site Proton acceptor is the Lys-337.

It belongs to the enolase family. Mg(2+) serves as cofactor.

Its subcellular location is the cytoplasm. The protein resides in the secreted. The protein localises to the cell surface. It carries out the reaction (2R)-2-phosphoglycerate = phosphoenolpyruvate + H2O. The protein operates within carbohydrate degradation; glycolysis; pyruvate from D-glyceraldehyde 3-phosphate: step 4/5. Functionally, catalyzes the reversible conversion of 2-phosphoglycerate (2-PG) into phosphoenolpyruvate (PEP). It is essential for the degradation of carbohydrates via glycolysis. The polypeptide is Enolase (Aromatoleum aromaticum (strain DSM 19018 / LMG 30748 / EbN1) (Azoarcus sp. (strain EbN1))).